The chain runs to 332 residues: 4-hydroxythreonine-4-phosphate dehydrogenase (332 aa).

Positions 138 and 139 each coordinate substrate. A divalent metal cation is bound by residues His-168, His-213, and His-269. Substrate-binding residues include Lys-277, Asn-286, and Arg-295.

It belongs to the PdxA family. In terms of assembly, homodimer. Zn(2+) serves as cofactor. Mg(2+) is required as a cofactor. It depends on Co(2+) as a cofactor.

Its subcellular location is the cytoplasm. The catalysed reaction is 4-(phosphooxy)-L-threonine + NAD(+) = 3-amino-2-oxopropyl phosphate + CO2 + NADH. Its pathway is cofactor biosynthesis; pyridoxine 5'-phosphate biosynthesis; pyridoxine 5'-phosphate from D-erythrose 4-phosphate: step 4/5. Its function is as follows. Catalyzes the NAD(P)-dependent oxidation of 4-(phosphooxy)-L-threonine (HTP) into 2-amino-3-oxo-4-(phosphooxy)butyric acid which spontaneously decarboxylates to form 3-amino-2-oxopropyl phosphate (AHAP). The sequence is that of 4-hydroxythreonine-4-phosphate dehydrogenase from Vibrio parahaemolyticus serotype O3:K6 (strain RIMD 2210633).